Reading from the N-terminus, the 224-residue chain is Ribonuclease HII (224 aa).

Residues 1 to 210 (MKLGGIDEAG…LKKIEEKLQK (210 aa)) form the RNase H type-2 domain. A divalent metal cation contacts are provided by aspartate 7, glutamate 8, and aspartate 105.

It belongs to the RNase HII family. Mn(2+) is required as a cofactor. The cofactor is Mg(2+).

The protein localises to the cytoplasm. The enzyme catalyses Endonucleolytic cleavage to 5'-phosphomonoester.. Functionally, endonuclease that specifically degrades the RNA of RNA-DNA hybrids. In Thermococcus sibiricus (strain DSM 12597 / MM 739), this protein is Ribonuclease HII.